Consider the following 86-residue polypeptide: DNA-directed RNA polymerase subunit omega (86 aa).

Belongs to the RNA polymerase subunit omega family. The RNAP catalytic core consists of 2 alpha, 1 beta, 1 beta' and 1 omega subunit. When a sigma factor is associated with the core the holoenzyme is formed, which can initiate transcription.

It carries out the reaction RNA(n) + a ribonucleoside 5'-triphosphate = RNA(n+1) + diphosphate. Its function is as follows. Promotes RNA polymerase assembly. Latches the N- and C-terminal regions of the beta' subunit thereby facilitating its interaction with the beta and alpha subunits. The protein is DNA-directed RNA polymerase subunit omega of Psychrobacter sp. (strain PRwf-1).